Reading from the N-terminus, the 87-residue chain is Small ribosomal subunit protein uS15 (87 aa).

It belongs to the universal ribosomal protein uS15 family. In terms of assembly, part of the 30S ribosomal subunit. Forms a bridge to the 50S subunit in the 70S ribosome, contacting the 23S rRNA.

Functionally, one of the primary rRNA binding proteins, it binds directly to 16S rRNA where it helps nucleate assembly of the platform of the 30S subunit by binding and bridging several RNA helices of the 16S rRNA. Forms an intersubunit bridge (bridge B4) with the 23S rRNA of the 50S subunit in the ribosome. The protein is Small ribosomal subunit protein uS15 of Pseudothermotoga lettingae (strain ATCC BAA-301 / DSM 14385 / NBRC 107922 / TMO) (Thermotoga lettingae).